A 181-amino-acid chain; its full sequence is ATP-dependent protease subunit ClpQ (181 aa).

Ser2 is an active-site residue. Na(+) contacts are provided by Gly165, Cys168, and Thr171.

In terms of assembly, a double ring-shaped homohexamer of ClpQ is capped on each side by a ring-shaped ClpY homohexamer. The assembly of the ClpQ/ClpY complex is dependent on binding of ATP.

The protein resides in the cytoplasm. Its function is as follows. Protease subunit of a proteasome-like degradation complex. The chain is ATP-dependent protease subunit ClpQ (clpQ) from Bacillus subtilis (strain 168).